The chain runs to 457 residues: PDZ and LIM domain protein 7 (457 aa).

A PDZ domain is found at 1-85 (MDSFKVVLEG…RLSLGLSRAQ (85 aa)). At Ser-78 the chain carries Phosphoserine. Disordered regions lie at residues 82-142 (SRAQ…LVPD), 176-226 (TEFM…PWAV), and 239-258 (TSTV…LQSR). Arg-103 bears the Asymmetric dimethylarginine mark. Ser-111 bears the Phosphoserine mark. Residues 208–221 (EPWPGPTAPSPTSR) are compositionally biased toward pro residues. Ser-247 carries the post-translational modification Phosphoserine. LIM zinc-binding domains lie at 280–338 (PVCH…VRYA), 339–398 (PSCA…MFGT), and 399–457 (KCHG…FSHV).

Binds via its LIM zinc-binding 3 domain (LIM 3) to endocytic codes of INSR, but not with those of IGF1R, LDLR, TFRC, or EGFR. Interacts with various PKC isoforms through the LIM zinc-binding domains. Binds to RET in a phosphorylation-independent manner via its LIM zinc-binding domain 2 (LIM 2). Probably part of a complex with SHC and the RET dimer. Interacts with TPM2. Interacts with TBX4 and TBX5. Isoform 1 and isoform 2 are expressed ubiquitously, however, isoform 2 predominates in skeletal muscle, isoform 1 is more abundant in lung, spleen, leukocytes and fetal liver.

It localises to the cytoplasm. The protein resides in the cytoskeleton. Functionally, may function as a scaffold on which the coordinated assembly of proteins can occur. May play a role as an adapter that, via its PDZ domain, localizes LIM-binding proteins to actin filaments of both skeletal muscle and nonmuscle tissues. Involved in both of the two fundamental mechanisms of bone formation, direct bone formation (e.g. embryonic flat bones mandible and cranium), and endochondral bone formation (e.g. embryonic long bone development). Plays a role during fracture repair. Involved in BMP6 signaling pathway. The protein is PDZ and LIM domain protein 7 (PDLIM7) of Homo sapiens (Human).